The sequence spans 300 residues: Zinc finger protein 705B (300 aa).

The KRAB domain maps to 7 to 78 (VTFEDVAIDF…GRVFLQDQNP (72 aa)). 3 consecutive C2H2-type zinc fingers follow at residues 172-194 (YQCNLCEKAYTNCFYLRRHKMTH), 200-222 (YACHLCGKAFTQCSHLRRHEKTH), and 228-250 (YKCHQCGKAFIQSFNLRRHERTH). The segment at 256–278 (YECDKSGKAFSQSSGFRGNKIIH) adopts a C2H2-type 4; degenerate zinc-finger fold.

This sequence belongs to the krueppel C2H2-type zinc-finger protein family.

The protein localises to the nucleus. Functionally, may be involved in transcriptional regulation. The polypeptide is Zinc finger protein 705B (ZNF705B) (Homo sapiens (Human)).